A 328-amino-acid chain; its full sequence is Tryptophan--tRNA ligase (328 aa).

ATP contacts are provided by residues glutamine 10 to threonine 12 and glycine 18 to asparagine 19. A 'HIGH' region motif is present at residues alanine 11 to asparagine 19. Residue aspartate 134 coordinates L-tryptophan. Residues glycine 146–aspartate 148, isoleucine 186, and lysine 195–serine 199 each bind ATP. Positions lysine 195–serine 199 match the 'KMSKS' region motif.

This sequence belongs to the class-I aminoacyl-tRNA synthetase family. As to quaternary structure, homodimer.

It localises to the cytoplasm. The catalysed reaction is tRNA(Trp) + L-tryptophan + ATP = L-tryptophyl-tRNA(Trp) + AMP + diphosphate + H(+). Catalyzes the attachment of tryptophan to tRNA(Trp). The polypeptide is Tryptophan--tRNA ligase (Rickettsia bellii (strain RML369-C)).